Here is a 229-residue protein sequence, read N- to C-terminus: UPF0758 protein Ppro_3582 (229 aa).

The segment at 1–20 (MCPGIREWPEDERPREKMLR) is disordered. A compositionally biased stretch (basic and acidic residues) spans 7–19 (EWPEDERPREKML). Residues 107-229 (RFTSPRQVFD…YLSFVERGVL (123 aa)) form the MPN domain. Zn(2+)-binding residues include H178, H180, and D191. The JAMM motif signature appears at 178–191 (HNHPTGDPTPSQED).

The protein belongs to the UPF0758 family.

The polypeptide is UPF0758 protein Ppro_3582 (Pelobacter propionicus (strain DSM 2379 / NBRC 103807 / OttBd1)).